A 239-amino-acid chain; its full sequence is tRNA (guanine-N(7)-)-methyltransferase (239 aa).

Glu69, Glu94, Asp121, and Asp144 together coordinate S-adenosyl-L-methionine. Asp144 is an active-site residue. Substrate-binding positions include Lys148, Asp180, and 217–220 (TKFE).

This sequence belongs to the class I-like SAM-binding methyltransferase superfamily. TrmB family. Monomer.

It carries out the reaction guanosine(46) in tRNA + S-adenosyl-L-methionine = N(7)-methylguanosine(46) in tRNA + S-adenosyl-L-homocysteine. It participates in tRNA modification; N(7)-methylguanine-tRNA biosynthesis. Functionally, catalyzes the formation of N(7)-methylguanine at position 46 (m7G46) in tRNA. This is tRNA (guanine-N(7)-)-methyltransferase from Buchnera aphidicola subsp. Acyrthosiphon pisum (strain 5A).